Here is a 114-residue protein sequence, read N- to C-terminus: UPF0339 protein plu2779 (114 aa).

2 consecutive repeat copies span residues 11–59 (TKNK…NFEI) and 62–110 (NKSG…VRDL).

The protein belongs to the UPF0339 family. Duplicated subfamily.

The polypeptide is UPF0339 protein plu2779 (Photorhabdus laumondii subsp. laumondii (strain DSM 15139 / CIP 105565 / TT01) (Photorhabdus luminescens subsp. laumondii)).